Consider the following 325-residue polypeptide: GMP reductase (325 aa).

The Thioimidate intermediate role is filled by cysteine 174. 203-226 contributes to the NADP(+) binding site; the sequence is LIADGGIRTHGDIAKSIRFGASMV.

This sequence belongs to the IMPDH/GMPR family. GuaC type 2 subfamily.

The enzyme catalyses IMP + NH4(+) + NADP(+) = GMP + NADPH + 2 H(+). Its function is as follows. Catalyzes the irreversible NADPH-dependent deamination of GMP to IMP. It functions in the conversion of nucleobase, nucleoside and nucleotide derivatives of G to A nucleotides, and in maintaining the intracellular balance of A and G nucleotides. The sequence is that of GMP reductase from Staphylococcus aureus (strain JH9).